Reading from the N-terminus, the 477-residue chain is Diacylglycerol O-acyltransferase 1-2 (477 aa).

Residues Met-1–Gln-48 form a disordered region. Positions Gly-12 to Arg-21 are enriched in basic and acidic residues. Over residues Arg-25–Gln-40 the composition is skewed to low complexity. 7 helical membrane passes run His-79–Ile-99, Trp-123–Glu-143, Val-155–Ile-175, Val-182–Phe-202, Asn-230–Tyr-250, Gly-263–Ile-283, and Val-319–Leu-339. An FYXDWWN motif motif is present at residues Phe-346–Asn-352. The next 3 membrane-spanning stretches (helical) occupy residues Gly-387–Val-407, Cys-409–Leu-429, and Val-442–Leu-462. Residue His-401 is part of the active site.

This sequence belongs to the membrane-bound acyltransferase family. Sterol o-acyltransferase subfamily.

It localises to the endoplasmic reticulum membrane. It catalyses the reaction an acyl-CoA + a 1,2-diacyl-sn-glycerol = a triacyl-sn-glycerol + CoA. Its pathway is glycerolipid metabolism; triacylglycerol biosynthesis. Involved in triacylglycerol (TAG) synthesis. Catalyzes the acylation of the sn-3 hydroxy group of sn-1,2-diacylglycerol using acyl-CoA. The sequence is that of Diacylglycerol O-acyltransferase 1-2 from Oryza sativa subsp. japonica (Rice).